Consider the following 143-residue polypeptide: Large ribosomal subunit protein uL11 (143 aa).

It belongs to the universal ribosomal protein uL11 family. As to quaternary structure, part of the ribosomal stalk of the 50S ribosomal subunit. Interacts with L10 and the large rRNA to form the base of the stalk. L10 forms an elongated spine to which L12 dimers bind in a sequential fashion forming a multimeric L10(L12)X complex. In terms of processing, one or more lysine residues are methylated.

Its function is as follows. Forms part of the ribosomal stalk which helps the ribosome interact with GTP-bound translation factors. The chain is Large ribosomal subunit protein uL11 from Paraburkholderia phymatum (strain DSM 17167 / CIP 108236 / LMG 21445 / STM815) (Burkholderia phymatum).